A 185-amino-acid polypeptide reads, in one-letter code: Cuticle protein 18.6, isoform B (185 aa).

6 repeat units span residues 21–24 (AAPA), 33–36 (AAPV), 41–44 (AAPV), 133–136 (AAPV), 139–142 (AAPV), and 150–153 (AAPV). One can recognise a Chitin-binding type R&amp;R domain in the interval 64 to 134 (HPQYSFAYNV…KEAGAHPAAA (71 aa)).

Component of the cuticle of migratory locust which contains more than 100 different structural proteins. This is Cuticle protein 18.6, isoform B from Locusta migratoria (Migratory locust).